The following is a 343-amino-acid chain: Multidrug resistance protein MdtN (343 aa).

Residues 1–12 (MESTPKKAPRSK) lie on the Cytoplasmic side of the membrane. The chain crosses the membrane as a helical; Signal-anchor for type II membrane protein span at residues 13–33 (FPALLVVALALVALVFVIWRV). The Periplasmic portion of the chain corresponds to 34–343 (DSAPSTNDAY…ASAVANLEPQ (310 aa)).

It belongs to the membrane fusion protein (MFP) (TC 8.A.1) family. In terms of assembly, could be part of a tripartite efflux system composed of MdtN, MdtO and MdtP.

It localises to the cell inner membrane. Functionally, could be involved in resistance to puromycin, acriflavine and tetraphenylarsonium chloride. This is Multidrug resistance protein MdtN (mdtN) from Escherichia coli O157:H7.